We begin with the raw amino-acid sequence, 916 residues long: RNA-directed DNA polymerase from mobile element jockey (916 aa).

A Reverse transcriptase domain is found at 483-757; it reads SILRVGYFPK…HEYKYLGVIL (275 aa). The interval 890–916 is disordered; it reads RSASPRSRVRRRLKRHHPQDLLDRALT. A compositionally biased stretch (basic residues) spans 896 to 906; sequence SRVRRRLKRHH. A compositionally biased stretch (basic and acidic residues) spans 907-916; that stretch reads PQDLLDRALT.

Requires Mg(2+) as cofactor. It depends on Mn(2+) as a cofactor.

It carries out the reaction DNA(n) + a 2'-deoxyribonucleoside 5'-triphosphate = DNA(n+1) + diphosphate. Inactivated by sulphydryl reagent. The sequence is that of RNA-directed DNA polymerase from mobile element jockey (jockey\pol) from Drosophila funebris (Fruit fly).